Reading from the N-terminus, the 473-residue chain is Cysteine--tRNA ligase (473 aa).

Cys29 provides a ligand contact to Zn(2+). The 'HIGH' region motif lies at 31–41 (ATVQSAPHIGH). Residues Cys207, His232, and Glu236 each coordinate Zn(2+). Residues 263-267 (KMSKS) carry the 'KMSKS' region motif. Lys266 contacts ATP.

This sequence belongs to the class-I aminoacyl-tRNA synthetase family. In terms of assembly, monomer. Zn(2+) serves as cofactor.

It localises to the cytoplasm. The catalysed reaction is tRNA(Cys) + L-cysteine + ATP = L-cysteinyl-tRNA(Cys) + AMP + diphosphate. The chain is Cysteine--tRNA ligase from Corynebacterium kroppenstedtii (strain DSM 44385 / JCM 11950 / CIP 105744 / CCUG 35717).